A 443-amino-acid polypeptide reads, in one-letter code: Xaa-Pro dipeptidase (443 aa).

Mn(2+)-binding residues include Asp246, Asp257, His339, Glu384, and Glu423.

The protein belongs to the peptidase M24B family. Bacterial-type prolidase subfamily. It depends on Mn(2+) as a cofactor.

The enzyme catalyses Xaa-L-Pro dipeptide + H2O = an L-alpha-amino acid + L-proline. In terms of biological role, splits dipeptides with a prolyl residue in the C-terminal position. This is Xaa-Pro dipeptidase from Escherichia coli O8 (strain IAI1).